A 207-amino-acid polypeptide reads, in one-letter code: Large ribosomal subunit protein uL4 (207 aa).

Residues 50-75 (KTKTVSEVSGTTKKPFKQKGTGNARQ) are disordered.

Belongs to the universal ribosomal protein uL4 family. As to quaternary structure, part of the 50S ribosomal subunit.

One of the primary rRNA binding proteins, this protein initially binds near the 5'-end of the 23S rRNA. It is important during the early stages of 50S assembly. It makes multiple contacts with different domains of the 23S rRNA in the assembled 50S subunit and ribosome. Functionally, forms part of the polypeptide exit tunnel. In Rickettsia felis (strain ATCC VR-1525 / URRWXCal2) (Rickettsia azadi), this protein is Large ribosomal subunit protein uL4.